The chain runs to 94 residues: DNA-binding protein HU (94 aa).

Belongs to the bacterial histone-like protein family. As to quaternary structure, homodimer.

Histone-like DNA-binding protein which is capable of wrapping DNA to stabilize it, and thus to prevent its denaturation under extreme environmental conditions. It is essential for heterocyst differentiation. The chain is DNA-binding protein HU (hup) from Nostoc sp. (strain PCC 7120 / SAG 25.82 / UTEX 2576).